The sequence spans 181 residues: Adenine phosphoribosyltransferase (181 aa).

The protein belongs to the purine/pyrimidine phosphoribosyltransferase family. In terms of assembly, homodimer.

It localises to the cytoplasm. The enzyme catalyses AMP + diphosphate = 5-phospho-alpha-D-ribose 1-diphosphate + adenine. It participates in purine metabolism; AMP biosynthesis via salvage pathway; AMP from adenine: step 1/1. In terms of biological role, catalyzes a salvage reaction resulting in the formation of AMP, that is energically less costly than de novo synthesis. The chain is Adenine phosphoribosyltransferase from Rhizobium leguminosarum bv. trifolii (strain WSM2304).